A 512-amino-acid polypeptide reads, in one-letter code: ADP,ATP carrier protein 4 (512 aa).

The next 12 membrane-spanning stretches (helical) occupy residues 34–54, 71–91, 102–122, 157–177, 192–212, 231–251, 296–316, 330–350, 361–381, 390–410, 448–468, and 476–496; these read ISKF…QNLI, ISFL…VMYV, IFYL…YVIF, FSLF…LLFW, FYPL…HFLE, FHTL…IVSI, LIAT…GPWK, AAFI…FVLL, FTSA…FFAF, LIIA…IGAI, VIGT…IFII, and SISI…IWAT.

Belongs to the ADP/ATP translocase tlc family.

The protein resides in the cell membrane. In terms of biological role, provides the rickettsial cell with host ATP in exchange for rickettsial ADP. This is an obligate exchange system. This energy acquiring activity is an important component of rickettsial parasitism. The sequence is that of ADP,ATP carrier protein 4 (tlcD) from Rickettsia typhi (strain ATCC VR-144 / Wilmington).